The primary structure comprises 339 residues: Uroporphyrinogen decarboxylase (339 aa).

Residues 23–27 (RQAGR), Asp72, Tyr147, Thr202, and His315 each bind substrate.

Belongs to the uroporphyrinogen decarboxylase family. In terms of assembly, homodimer.

It is found in the cytoplasm. It catalyses the reaction uroporphyrinogen III + 4 H(+) = coproporphyrinogen III + 4 CO2. It participates in porphyrin-containing compound metabolism; protoporphyrin-IX biosynthesis; coproporphyrinogen-III from 5-aminolevulinate: step 4/4. In terms of biological role, catalyzes the decarboxylation of four acetate groups of uroporphyrinogen-III to yield coproporphyrinogen-III. The protein is Uroporphyrinogen decarboxylase of Geotalea uraniireducens (strain Rf4) (Geobacter uraniireducens).